The chain runs to 329 residues: 4-hydroxythreonine-4-phosphate dehydrogenase (329 aa).

Histidine 137 and threonine 138 together coordinate substrate. A divalent metal cation-binding residues include histidine 167, histidine 212, and histidine 267. Positions 275, 284, and 293 each coordinate substrate.

This sequence belongs to the PdxA family. Homodimer. Zn(2+) is required as a cofactor. The cofactor is Mg(2+). It depends on Co(2+) as a cofactor.

The protein localises to the cytoplasm. The catalysed reaction is 4-(phosphooxy)-L-threonine + NAD(+) = 3-amino-2-oxopropyl phosphate + CO2 + NADH. It participates in cofactor biosynthesis; pyridoxine 5'-phosphate biosynthesis; pyridoxine 5'-phosphate from D-erythrose 4-phosphate: step 4/5. Its function is as follows. Catalyzes the NAD(P)-dependent oxidation of 4-(phosphooxy)-L-threonine (HTP) into 2-amino-3-oxo-4-(phosphooxy)butyric acid which spontaneously decarboxylates to form 3-amino-2-oxopropyl phosphate (AHAP). The chain is 4-hydroxythreonine-4-phosphate dehydrogenase from Stutzerimonas stutzeri (strain A1501) (Pseudomonas stutzeri).